We begin with the raw amino-acid sequence, 98 residues long: NADH-ubiquinone oxidoreductase chain 4L (98 aa).

Transmembrane regions (helical) follow at residues 2–22 (PSIF…TLVF), 29–49 (SLLC…LIIL), and 61–81 (ILLL…LVMV).

This sequence belongs to the complex I subunit 4L family. Core subunit of respiratory chain NADH dehydrogenase (Complex I) which is composed of 45 different subunits.

It localises to the mitochondrion inner membrane. It carries out the reaction a ubiquinone + NADH + 5 H(+)(in) = a ubiquinol + NAD(+) + 4 H(+)(out). Core subunit of the mitochondrial membrane respiratory chain NADH dehydrogenase (Complex I) which catalyzes electron transfer from NADH through the respiratory chain, using ubiquinone as an electron acceptor. Part of the enzyme membrane arm which is embedded in the lipid bilayer and involved in proton translocation. This chain is NADH-ubiquinone oxidoreductase chain 4L (MT-ND4L), found in Propithecus tattersalli (Golden-crowned Sifaka).